We begin with the raw amino-acid sequence, 363 residues long: 3-isopropylmalate dehydrogenase (363 aa).

Residue 78-91 (GPKWEHLPPAEQPE) coordinates NAD(+). The substrate site is built by Arg-99, Arg-109, Arg-138, and Asp-227. Mg(2+) contacts are provided by Asp-227, Asp-251, and Asp-255. Position 285–297 (285–297 (GSAPDIAGKGIAN)) interacts with NAD(+).

The protein belongs to the isocitrate and isopropylmalate dehydrogenases family. LeuB type 1 subfamily. As to quaternary structure, homodimer. It depends on Mg(2+) as a cofactor. The cofactor is Mn(2+).

Its subcellular location is the cytoplasm. It catalyses the reaction (2R,3S)-3-isopropylmalate + NAD(+) = 4-methyl-2-oxopentanoate + CO2 + NADH. The protein operates within amino-acid biosynthesis; L-leucine biosynthesis; L-leucine from 3-methyl-2-oxobutanoate: step 3/4. Catalyzes the oxidation of 3-carboxy-2-hydroxy-4-methylpentanoate (3-isopropylmalate) to 3-carboxy-4-methyl-2-oxopentanoate. The product decarboxylates to 4-methyl-2 oxopentanoate. This is 3-isopropylmalate dehydrogenase from Photorhabdus laumondii subsp. laumondii (strain DSM 15139 / CIP 105565 / TT01) (Photorhabdus luminescens subsp. laumondii).